Consider the following 349-residue polypeptide: Hydroxymethylglutaryl-CoA synthase (349 aa).

D29 serves as a coordination point for (3S)-3-hydroxy-3-methylglutaryl-CoA. Residue E81 is the Proton donor/acceptor of the active site. 4 residues coordinate (3S)-3-hydroxy-3-methylglutaryl-CoA: C113, S154, T202, and H235. The active-site Acyl-thioester intermediate is the C113. The active-site Proton donor/acceptor is the H235. A CoA-binding site is contributed by R240. R244, N267, and S297 together coordinate (3S)-3-hydroxy-3-methylglutaryl-CoA.

Belongs to the thiolase-like superfamily. Archaeal HMG-CoA synthase family. In terms of assembly, interacts with acetoacetyl-CoA thiolase that catalyzes the precedent step in the pathway and with a DUF35 protein. The acetoacetyl-CoA thiolase/HMG-CoA synthase complex channels the intermediate via a fused CoA-binding site, which allows for efficient coupling of the endergonic thiolase reaction with the exergonic HMGCS reaction.

The catalysed reaction is acetoacetyl-CoA + acetyl-CoA + H2O = (3S)-3-hydroxy-3-methylglutaryl-CoA + CoA + H(+). It participates in metabolic intermediate biosynthesis; (R)-mevalonate biosynthesis; (R)-mevalonate from acetyl-CoA: step 2/3. In terms of biological role, catalyzes the condensation of acetyl-CoA with acetoacetyl-CoA to form 3-hydroxy-3-methylglutaryl-CoA (HMG-CoA). Functions in the mevalonate (MVA) pathway leading to isopentenyl diphosphate (IPP), a key precursor for the biosynthesis of isoprenoid compounds that are building blocks of archaeal membrane lipids. This chain is Hydroxymethylglutaryl-CoA synthase, found in Pyrobaculum arsenaticum (strain DSM 13514 / JCM 11321 / PZ6).